The sequence spans 353 residues: MTARLRPELAGLPVYVPGKTVPGAIKLASNETVFGPLPSVRAAIDRATDTVNRYPDNGCVQLKAALARHLGPDFAPEHVAVGCGSVSLCQQLVQVTASVGDEVVFGWRSFELYPPQVRVAGAIPIQVPLTDHTFDLYAMLATVTDRTRLIFVCNPNNPTSTVVGPDALARFVEAVPAHILIAIDEAYVEYIRDGMRPDSLGLVRAHNNVVVLRTFSKAYGLAGLRIGYAIGHPDVITALDKVYVPFTVSSIGQAAAIASLDAADELLARTDTVVAERARVSAELRAAGFTLPPSQANFVWLPLGSRTQDFVEQAADARIVVRPYGTDGVRVTVAAPEENDAFLRFARRWRSDQ.

K217 is modified (N6-(pyridoxal phosphate)lysine).

The protein belongs to the class-II pyridoxal-phosphate-dependent aminotransferase family. In terms of assembly, homodimer. Pyridoxal 5'-phosphate serves as cofactor.

The enzyme catalyses an aromatic L-alpha-amino acid + 2-oxoglutarate = an aromatic oxo-acid + L-glutamate. Aminotransferase that catalyzes the conversion of aromatic amino acids and 2-oxoglutarate into corresponding aromatic oxo acids and L-glutamate. In Mycobacterium tuberculosis (strain ATCC 25177 / H37Ra), this protein is Aromatic amino acid aminotransferase.